The primary structure comprises 319 residues: ATP-dependent 6-phosphofructokinase (319 aa).

ATP is bound at residue G11. Residue 21–25 coordinates ADP; the sequence is RAVVR. ATP is bound by residues 72-73 and 102-105; these read RY and GDGS. D103 contributes to the Mg(2+) binding site. A substrate-binding site is contributed by 125 to 127; sequence TID. D127 functions as the Proton acceptor in the catalytic mechanism. An ADP-binding site is contributed by R154. Substrate-binding positions include R162 and 169–171; that span reads MGR. ADP-binding positions include 185-187, R211, and 213-215; these read GAE and KKH. Substrate-binding positions include E222, R243, and 249–252; that span reads HVQR.

Belongs to the phosphofructokinase type A (PFKA) family. ATP-dependent PFK group I subfamily. Prokaryotic clade 'B1' sub-subfamily. In terms of assembly, homotetramer. Mg(2+) is required as a cofactor.

It localises to the cytoplasm. It catalyses the reaction beta-D-fructose 6-phosphate + ATP = beta-D-fructose 1,6-bisphosphate + ADP + H(+). It functions in the pathway carbohydrate degradation; glycolysis; D-glyceraldehyde 3-phosphate and glycerone phosphate from D-glucose: step 3/4. Allosterically activated by ADP and other diphosphonucleosides, and allosterically inhibited by phosphoenolpyruvate. Catalyzes the phosphorylation of D-fructose 6-phosphate to fructose 1,6-bisphosphate by ATP, the first committing step of glycolysis. This Listeria innocua serovar 6a (strain ATCC BAA-680 / CLIP 11262) protein is ATP-dependent 6-phosphofructokinase.